We begin with the raw amino-acid sequence, 232 residues long: Large ribosomal subunit protein uL1 (232 aa).

This sequence belongs to the universal ribosomal protein uL1 family. In terms of assembly, part of the 50S ribosomal subunit.

In terms of biological role, binds directly to 23S rRNA. The L1 stalk is quite mobile in the ribosome, and is involved in E site tRNA release. Its function is as follows. Protein L1 is also a translational repressor protein, it controls the translation of the L11 operon by binding to its mRNA. This is Large ribosomal subunit protein uL1 from Parabacteroides distasonis (strain ATCC 8503 / DSM 20701 / CIP 104284 / JCM 5825 / NCTC 11152).